Consider the following 433-residue polypeptide: Urokinase-type plasminogen activator (433 aa).

The signal sequence occupies residues 1 to 20 (MRVLLACLLVCALVVSDSDG). Residues 29 to 65 (GESNCGCLNGGKCVTYKYFSNIQRCSCPKKFQGEHCE) enclose the EGF-like domain. 6 cysteine pairs are disulfide-bonded: C33-C41, C35-C53, C55-C64, C72-C153, C93-C135, and C124-C148. Residues 36 to 59 (LNGGKCVTYKYFSNIQRCSCPKKF) form a binds urokinase plasminogen activator surface receptor region. A Kringle domain is found at 72–153 (CYQGNGHSYR…FVQFCMVQDC (82 aa)). The segment at 154–180 (SVGKSPSSPREKEEFQCGQKALRPRFK) is connecting peptide. S160 is modified (phosphoserine). 6 disulfide bridges follow: C170-C301, C211-C227, C219-C290, C315-C384, C347-C363, and C374-C402. The 246-residue stretch at 181-426 (IVGGQVTNAE…FLPWINTHTR (246 aa)) folds into the Peptidase S1 domain. Residues H226 and D277 each act as charge relay system in the active site. The Charge relay system role is filled by S378.

Belongs to the peptidase S1 family. In terms of assembly, found in high and low molecular mass forms. Each consists of two chains, A and B. The high molecular mass form contains a long chain A which is cleaved to yield a short chain A. Forms heterodimer with SERPINA5. Binds LRP1B; binding is followed by internalization and degradation. Interacts with MRC2. Interacts with PLAUR. In complex with SERPINE1, interacts with PLAUR/uPAR. Interacts with SORL1 and LRP1, either alone or in complex with SERPINE1; these interactions are abolished in the presence of LRPAP1/RAP. The ternary complex composed of PLAUR-PLAU-PAI1 also interacts with SORLA. Produced as an inactive single-chain protein (pro-uPA or sc-uPA), is processed into the active disulfide-linked two-chain form of PLAU/uPA by a proteolytic event mediated, at least, by TMPRSS4.

The protein localises to the secreted. The enzyme catalyses Specific cleavage of Arg-|-Val bond in plasminogen to form plasmin.. Its activity is regulated as follows. Inhibited by SERPINA5. Inhibited by SERPINE1. Functionally, specifically cleaves the zymogen plasminogen to form the active enzyme plasmin. The chain is Urokinase-type plasminogen activator (PLAU) from Bos taurus (Bovine).